We begin with the raw amino-acid sequence, 271 residues long: Ribosomal RNA small subunit methyltransferase A (271 aa).

Residues Asn19, Leu21, Gly46, Glu67, Asp92, and Asn114 each coordinate S-adenosyl-L-methionine.

It belongs to the class I-like SAM-binding methyltransferase superfamily. rRNA adenine N(6)-methyltransferase family. RsmA subfamily.

Its subcellular location is the cytoplasm. The catalysed reaction is adenosine(1518)/adenosine(1519) in 16S rRNA + 4 S-adenosyl-L-methionine = N(6)-dimethyladenosine(1518)/N(6)-dimethyladenosine(1519) in 16S rRNA + 4 S-adenosyl-L-homocysteine + 4 H(+). Its function is as follows. Specifically dimethylates two adjacent adenosines (A1518 and A1519) in the loop of a conserved hairpin near the 3'-end of 16S rRNA in the 30S particle. May play a critical role in biogenesis of 30S subunits. In Aeromonas hydrophila subsp. hydrophila (strain ATCC 7966 / DSM 30187 / BCRC 13018 / CCUG 14551 / JCM 1027 / KCTC 2358 / NCIMB 9240 / NCTC 8049), this protein is Ribosomal RNA small subunit methyltransferase A.